The chain runs to 453 residues: Sodium/alanine symporter AgcS (453 aa).

Over 1–17 (MDFVSLVNTVNSFVWGP) the chain is Extracellular. A helical transmembrane segment spans residues 18-32 (YMLVLLLGTGIFLTL). Over 33 to 67 (RLGFMQIHTLPYALKLAFSKHQDETSEGDISHFQA) the chain is Cytoplasmic. Residues 68 to 89 (LMTALAATIGTGNIAGVATAYV) traverse the membrane as a helical segment. Thr75 is a D-alanine binding site. Positions 75 and 79 each coordinate L-alanine. Residue Asn80 participates in D-alanine binding. The Extracellular portion of the chain corresponds to 90–92 (LGG). Residues 93–111 (PGAIFWMWVTAFFGMATKY) traverse the membrane as a helical segment. Residues 112–148 (AEAVLAIKYRTVDDNGEMAGGPMYFLEKGLPDHGLGK) are Cytoplasmic-facing. Residues 149–179 (ILGVAFAFFGAFAAFGIGNMVQTNSVADAVA) traverse the membrane as a helical segment. Residue Gln170 participates in D-alanine binding. Position 170 (Gln170) interacts with L-alanine. Residues 180–186 (SNFGVDP) are Extracellular-facing. The chain crosses the membrane as a helical span at residues 187-202 (LITGFVLAIFTAAVIL). Over 203–206 (GGIK) the chain is Cytoplasmic. Residues 207-233 (SIGKATGIIVPFMAVFYILAGLVILAM) form a helical membrane-spanning segment. Topologically, residues 234 to 258 (NIGYIIPAFGTIFSSAFNFSAGFGA) are extracellular. The helical transmembrane segment at 259–274 (LIGTAIMWGVKRGVFS) threads the bilayer. 273–274 (FS) is a binding site for D-alanine. Residue 273-276 (FSNE) participates in L-alanine binding. The Cytoplasmic portion of the chain corresponds to 275–300 (NEAGLGSAPIAAAAAKTDHPGRQALV). The chain crosses the membrane as a helical span at residues 301–322 (SMTGTFLDTIVVCTITGLVLTI). Residues 323–350 (AGLKAFPGLTDLTGASLTAASFDALMPM) lie on the Extracellular side of the membrane. A helical transmembrane segment spans residues 351–378 (GGLIVTIGLVFFAYSTVLGWSYYGEKCF). Residues 379 to 386 (EYLIGTKG) are Cytoplasmic-facing. Residues 387-403 (IRLYRIAFVLVAFWGAT) form a helical membrane-spanning segment. The Extracellular segment spans residues 404–408 (ASLPL). Residues 409–430 (VWNIADTLNGAMAIPNLIGLLL) form a helical membrane-spanning segment. Residues 431–453 (LSGVVVSETKAFNEIRKNEAKNA) lie on the Cytoplasmic side of the membrane.

This sequence belongs to the alanine or glycine:cation symporter (AGCS) (TC 2.A.25) family.

The protein resides in the cell membrane. The catalysed reaction is D-alanine(in) + Na(+)(in) = D-alanine(out) + Na(+)(out). The enzyme catalyses L-alanine(in) + Na(+)(in) = L-alanine(out) + Na(+)(out). It catalyses the reaction glycine(in) + Na(+)(in) = glycine(out) + Na(+)(out). Its function is as follows. Catalyzes the sodium-dependent uptake of extracellular D-alanine and L-alanine. Can also transport glycine. Binds glycine and both enantiomers of alanine, while strictly excluding other amino acids. In Methanococcus maripaludis (strain DSM 14266 / JCM 13030 / NBRC 101832 / S2 / LL), this protein is Sodium/alanine symporter AgcS.